A 385-amino-acid polypeptide reads, in one-letter code: Succinate--CoA ligase [ADP-forming] subunit beta (385 aa).

Residues 9–240 enclose the ATP-grasp domain; the sequence is KEIFAKYGIP…ETQLPQLEVE (232 aa). ATP-binding positions include K46, 53–55, E98, T101, and E106; that span reads GRG. Residues N195 and D209 each coordinate Mg(2+). Substrate is bound by residues N260 and 317–319; that span reads GIL.

It belongs to the succinate/malate CoA ligase beta subunit family. In terms of assembly, heterotetramer of two alpha and two beta subunits. The cofactor is Mg(2+).

It carries out the reaction succinate + ATP + CoA = succinyl-CoA + ADP + phosphate. The enzyme catalyses GTP + succinate + CoA = succinyl-CoA + GDP + phosphate. It functions in the pathway carbohydrate metabolism; tricarboxylic acid cycle; succinate from succinyl-CoA (ligase route): step 1/1. Its function is as follows. Succinyl-CoA synthetase functions in the citric acid cycle (TCA), coupling the hydrolysis of succinyl-CoA to the synthesis of either ATP or GTP and thus represents the only step of substrate-level phosphorylation in the TCA. The beta subunit provides nucleotide specificity of the enzyme and binds the substrate succinate, while the binding sites for coenzyme A and phosphate are found in the alpha subunit. The sequence is that of Succinate--CoA ligase [ADP-forming] subunit beta from Aquifex aeolicus (strain VF5).